Consider the following 257-residue polypeptide: Phosphonates import ATP-binding protein PhnC (257 aa).

Positions 4–248 constitute an ABC transporter domain; sequence IEFKDVRKVY…AFNEIYGRSI (245 aa). Residue 37–44 participates in ATP binding; the sequence is GLSGSGKS.

This sequence belongs to the ABC transporter superfamily. Phosphonates importer (TC 3.A.1.9.1) family. The complex is composed of two ATP-binding proteins (PhnC), two transmembrane proteins (PhnE) and a solute-binding protein (PhnD).

The protein localises to the cell membrane. It carries out the reaction phosphonate(out) + ATP + H2O = phosphonate(in) + ADP + phosphate + H(+). Functionally, part of the ABC transporter complex PhnCDE involved in phosphonates import. Responsible for energy coupling to the transport system. This chain is Phosphonates import ATP-binding protein PhnC, found in Staphylococcus saprophyticus subsp. saprophyticus (strain ATCC 15305 / DSM 20229 / NCIMB 8711 / NCTC 7292 / S-41).